A 153-amino-acid polypeptide reads, in one-letter code: Small ribosomal subunit protein bS16 (153 aa).

The segment at 114 to 153 (ENEPVGEAITPKKKKAKAEDAEAAADAPAEAAAESEAADK) is disordered. Residues 137–153 (AADAPAEAAAESEAADK) are compositionally biased toward low complexity.

This sequence belongs to the bacterial ribosomal protein bS16 family.

In Rhodococcus jostii (strain RHA1), this protein is Small ribosomal subunit protein bS16.